The sequence spans 171 residues: tRNA-splicing endonuclease subunit Sen15 (171 aa).

The tract at residues 1–35 is disordered; sequence MEERGDSEPTPGCSGLGPGGVRGFGDGGGAPSWAP. Residue Ser-7 is modified to Phosphoserine. Residues 14-30 show a composition bias toward gly residues; that stretch reads SGLGPGGVRGFGDGGGA. Ser-168 carries the phosphoserine modification.

The protein belongs to the SEN15 family. As to quaternary structure, homodimer. tRNA splicing endonuclease is a heterotetramer composed of TSEN2, TSEN15, TSEN34/LENG5 and TSEN54. tRNA splicing endonuclease complex also contains proteins of the Pre-mRNA 3' end processing machinery, such as CLP1, CPSF1, CPSF4 and CSTF2. Widely expressed. Highly expressed in testis and uterus.

The protein resides in the nucleus. The protein localises to the nucleolus. Its function is as follows. Non-catalytic subunit of the tRNA-splicing endonuclease complex, a complex responsible for identification and cleavage of the splice sites in pre-tRNA. It cleaves pre-tRNA at the 5' and 3' splice sites to release the intron. The products are an intron and two tRNA half-molecules bearing 2',3' cyclic phosphate and 5'-OH termini. There are no conserved sequences at the splice sites, but the intron is invariably located at the same site in the gene, placing the splice sites an invariant distance from the constant structural features of the tRNA body. The tRNA splicing endonuclease is also involved in mRNA processing via its association with pre-mRNA 3'-end processing factors, establishing a link between pre-tRNA splicing and pre-mRNA 3'-end formation, suggesting that the endonuclease subunits function in multiple RNA-processing events. This chain is tRNA-splicing endonuclease subunit Sen15 (TSEN15), found in Homo sapiens (Human).